We begin with the raw amino-acid sequence, 62 residues long: Synergistic-type venom protein C8S2, chain 2 (62 aa).

Disulfide bonds link Cys-3–Cys-24, Cys-17–Cys-42, and Cys-46–Cys-57.

This sequence belongs to the three-finger toxin family. Short-chain subfamily. Aminergic toxin sub-subfamily. As to quaternary structure, heterodimer of C8S2 chain 1 (AC P01410) and chain 2; disulfide-linked. As to expression, expressed by the venom gland.

The protein resides in the secreted. This protein shows a synergetic toxic effect in that it enhances the toxicity of other toxins. The chain is Synergistic-type venom protein C8S2, chain 2 from Dendroaspis angusticeps (Eastern green mamba).